Reading from the N-terminus, the 319-residue chain is HPr kinase/phosphorylase (319 aa).

Active-site residues include His-141 and Lys-162. 156–163 contributes to the ATP binding site; the sequence is GNSGVGKS. Ser-163 contacts Mg(2+). Catalysis depends on Asp-180, which acts as the Proton acceptor; for phosphorylation activity. Proton donor; for dephosphorylation activity. The segment at 204 to 213 is important for the catalytic mechanism of both phosphorylation and dephosphorylation; sequence MEIRGIGIID. A Mg(2+)-binding site is contributed by Glu-205. Arg-246 is a catalytic residue. Residues 267–272 form an important for the catalytic mechanism of dephosphorylation region; the sequence is PVKVGR.

Belongs to the HPrK/P family. As to quaternary structure, homohexamer. Requires Mg(2+) as cofactor.

The enzyme catalyses [HPr protein]-L-serine + ATP = [HPr protein]-O-phospho-L-serine + ADP + H(+). The catalysed reaction is [HPr protein]-O-phospho-L-serine + phosphate + H(+) = [HPr protein]-L-serine + diphosphate. Catalyzes the ATP- as well as the pyrophosphate-dependent phosphorylation of a specific serine residue in HPr, a phosphocarrier protein of the phosphoenolpyruvate-dependent sugar phosphotransferase system (PTS). HprK/P also catalyzes the pyrophosphate-producing, inorganic phosphate-dependent dephosphorylation (phosphorolysis) of seryl-phosphorylated HPr (P-Ser-HPr). The two antagonistic activities of HprK/P are regulated by several intracellular metabolites, which change their concentration in response to the absence or presence of rapidly metabolisable carbon sources (glucose, fructose, etc.) in the growth medium. Therefore, by controlling the phosphorylation state of HPr, HPrK/P is a sensor enzyme that plays a major role in the regulation of carbon metabolism and sugar transport: it mediates carbon catabolite repression (CCR), and regulates PTS-catalyzed carbohydrate uptake and inducer exclusion. This chain is HPr kinase/phosphorylase, found in Lactobacillus gasseri (strain ATCC 33323 / DSM 20243 / BCRC 14619 / CIP 102991 / JCM 1131 / KCTC 3163 / NCIMB 11718 / NCTC 13722 / AM63).